A 395-amino-acid polypeptide reads, in one-letter code: Obg-like ATPase 1 (395 aa).

The 259-residue stretch at 22-280 (LKVGILGLPN…MPEDERQKYL (259 aa)) folds into the OBG-type G domain. An ATP-binding site is contributed by 31 to 36 (NVGKST). Mg(2+) contacts are provided by Ser-35 and Thr-55. Leu-228 lines the ATP pocket. The TGS domain occupies 301–384 (QLEYFFTSGE…QDGDVIFFKF (84 aa)).

The protein belongs to the TRAFAC class OBG-HflX-like GTPase superfamily. OBG GTPase family. YchF/OLA1 subfamily. In terms of assembly, monomer. Mg(2+) is required as a cofactor. As to expression, expressed in the nervous system, pharyngeal muscles and intestine (at protein level).

The protein resides in the cytoplasm. In terms of biological role, hydrolyzes ATP, and can also hydrolyze GTP with lower efficiency. Has lower affinity for GTP. Plays a role in regulating starvation-induced thermotaxis responses in AFD thermosensory neurons. The polypeptide is Obg-like ATPase 1 (Caenorhabditis elegans).